We begin with the raw amino-acid sequence, 371 residues long: Fructose-1,6-bisphosphatase class 1 1 (371 aa).

Residues glutamate 115, aspartate 134, leucine 136, and aspartate 137 each coordinate Mg(2+). Residues 137-140 (DGSS), asparagine 228, and 280-282 (YLY) each bind substrate. Mg(2+) is bound at residue glutamate 300.

The protein belongs to the FBPase class 1 family. As to quaternary structure, homotetramer. Mg(2+) serves as cofactor.

Its subcellular location is the cytoplasm. The catalysed reaction is beta-D-fructose 1,6-bisphosphate + H2O = beta-D-fructose 6-phosphate + phosphate. The protein operates within carbohydrate biosynthesis; gluconeogenesis. The polypeptide is Fructose-1,6-bisphosphatase class 1 1 (Xanthobacter autotrophicus (strain ATCC BAA-1158 / Py2)).